A 369-amino-acid polypeptide reads, in one-letter code: MATLDVNPQRYQEQLAEKVERLTDMFAPYNVPELEVFESPEQHYRMRAEFRVWHEGEDLYYIMFNQETREKYRVDQFPAASRLINDLMPLLVEAMKDNESLRRKLFQVDFLSTLSGEILVSLLYHRQLDEEWIENAKALKQRLNDEGFNLNIIGRARKMKIILDRDYVIEKLDVNGQSYIYQQVENSFTQPNGKVAEKMLEWAVDCTQESTGDLLELYCGNGNFSLALAQNFDRVLATELAKPSVESAQYNIAANKIDNVQIIRMSAEEFTEAMEGKREFRRLKDNGVDLKSYNCNTIFVDPPRAGMDVDTCKMVQGYERIMYISCNPETLKENLDILSETHNVTRFALFDQFPYTHHMEAGVLLERKA.

The S-adenosyl-L-methionine site is built by Q190, Y218, N223, E239, and D301. The active-site Nucleophile is the C326. E360 acts as the Proton acceptor in catalysis.

It belongs to the class I-like SAM-binding methyltransferase superfamily. RNA M5U methyltransferase family. TrmA subfamily.

The catalysed reaction is uridine(54) in tRNA + S-adenosyl-L-methionine = 5-methyluridine(54) in tRNA + S-adenosyl-L-homocysteine + H(+). The enzyme catalyses uridine(341) in tmRNA + S-adenosyl-L-methionine = 5-methyluridine(341) in tmRNA + S-adenosyl-L-homocysteine + H(+). Its function is as follows. Dual-specificity methyltransferase that catalyzes the formation of 5-methyluridine at position 54 (m5U54) in all tRNAs, and that of position 341 (m5U341) in tmRNA (transfer-mRNA). The sequence is that of tRNA/tmRNA (uracil-C(5))-methyltransferase from Vibrio parahaemolyticus serotype O3:K6 (strain RIMD 2210633).